A 445-amino-acid chain; its full sequence is MGRLFGTDGVRGLANTELTAELALQVASAAATVLASPGSGGRKTAVVGRDPRASGEMLEAAVVAGLTSAGVDVLNVGVLPTPAVAFLTAELDAALGVMISASHNPMPDNGIKIFAAGGHKLDDEVEDRIESVATGTATRRAPTGAGIGRVHTVPDAADRYLQHLTTALPNRLDGLTVVVDCAHGAASDVAPAAYRAAGATVVAINAEPDGLNINENCGSTHLEGLQKAVVRHGADLGLAHDGDADRCLAVDAGGSLVDGDAIMTVLALGMRDAGELVDDTLVATVMSNLGLHIAMREAGISLVTTAVGDRYVLEGLRSGGFSLGGEQSGHVVFPAFGTTGDGVLTGLRLMGRMAETGQPIAELASAMTTLPQVLVNVKVADKRAVAASPVVLDAVLAAERSLGENGRVLLRPSGTEQLVRVMVEASDLEVARKLADELAGTVASV.

Catalysis depends on S102, which acts as the Phosphoserine intermediate. Positions 102, 241, 243, and 245 each coordinate Mg(2+). The residue at position 102 (S102) is a Phosphoserine.

This sequence belongs to the phosphohexose mutase family. The cofactor is Mg(2+). Post-translationally, activated by phosphorylation.

The catalysed reaction is alpha-D-glucosamine 1-phosphate = D-glucosamine 6-phosphate. Functionally, catalyzes the conversion of glucosamine-6-phosphate to glucosamine-1-phosphate. The protein is Phosphoglucosamine mutase of Rhodococcus opacus (strain B4).